Here is a 255-residue protein sequence, read N- to C-terminus: Coniferyl-alcohol dehydrogenase (255 aa).

Residues 12-17 (GVSSGI), Asp-36, 51-52 (DL), and Gly-77 each bind NAD(+). Substrate is bound at residue Ser-117. NAD(+)-binding residues include Tyr-157 and Lys-161. The active-site Proton acceptor is the Tyr-157.

The protein belongs to the short-chain dehydrogenases/reductases (SDR) family.

It carries out the reaction (E)-coniferol + NADP(+) = (E)-coniferaldehyde + NADPH + H(+). Functionally, catalyzes the conversion of coniferyl alcohol into coniferyl aldehyde in the eugenol degradation pathway. Specific for coniferyl alcohol; does not act on cinnamyl alcohol, 4-coumaryl alcohol or sinapyl alcohol. This is Coniferyl-alcohol dehydrogenase (calA) from Pseudomonas sp. (strain HR199 / DSM 7063).